The chain runs to 376 residues: Putative aryl-alcohol dehydrogenase AAD14 (376 aa).

The active-site Proton donor is Tyr76. His151 is a binding site for substrate. 236-246 is a binding site for NADP(+); the sequence is DVMGGGRFQSK.

Belongs to the aldo/keto reductase family. Aldo/keto reductase 2 subfamily.

The protein is Putative aryl-alcohol dehydrogenase AAD14 (AAD14) of Saccharomyces cerevisiae (strain ATCC 204508 / S288c) (Baker's yeast).